The primary structure comprises 350 residues: Galactokinase (350 aa).

Residue 14-17 (EHTD) participates in substrate binding. ATP-binding positions include Ser-46 and 96-102 (GAGLSSS). The Mg(2+) site is built by Ser-102 and Glu-134. The active-site Proton acceptor is the Asp-146. Tyr-196 contributes to the substrate binding site.

This sequence belongs to the GHMP kinase family. GalK subfamily.

It is found in the cytoplasm. It carries out the reaction alpha-D-galactose + ATP = alpha-D-galactose 1-phosphate + ADP + H(+). It functions in the pathway carbohydrate metabolism; galactose metabolism. Its function is as follows. Catalyzes the transfer of the gamma-phosphate of ATP to D-galactose to form alpha-D-galactose-1-phosphate (Gal-1-P). This is Galactokinase from Thermotoga maritima (strain ATCC 43589 / DSM 3109 / JCM 10099 / NBRC 100826 / MSB8).